The sequence spans 1258 residues: Plasma membrane calcium-transporting ATPase 3 (1258 aa).

The segment covering 1–19 (MGDMANSSIEFHPKPQQQR) has biased composition (polar residues). The tract at residues 1-22 (MGDMANSSIEFHPKPQQQREVP) is disordered. Residues 1–97 (MGDMANSSIE…NFIPPKQPKT (97 aa)) are Cytoplasmic-facing. A Phosphoserine modification is found at serine 8. A helical transmembrane segment spans residues 98-118 (FLQLVWEALQDVTLIILEVAA). The Extracellular segment spans residues 119–155 (IVSLGLSFYAPPGEESEACGNVSGGAEDEGEAEAGWI). The helical transmembrane segment at 156–176 (EGAAILLSVICVVLVTAFNDW) threads the bilayer. The Cytoplasmic portion of the chain corresponds to 177-364 (SKEKQFRGLQ…KEKSVLQGKL (188 aa)). Disordered stretches follow at residues 298–328 (EEEK…GAVA) and 335–354 (KSAE…NVPK). Basic and acidic residues-rich tracts occupy residues 299-308 (EEKKDKKGKQ) and 342-354 (MEER…NVPK). Residues 365 to 384 (TKLAVQIGKAGLVMSAITVI) traverse the membrane as a helical segment. The Extracellular portion of the chain corresponds to 385–417 (ILVLYFVIETFVVDGRVWLAECTPVYVQYFVKF). Residues 418 to 435 (FIIGVTVLVVAVPEGLPL) form a helical membrane-spanning segment. Residues 436-849 (AVTISLAYSV…MWGRNVYDSI (414 aa)) lie on the Cytoplasmic side of the membrane. Aspartate 473 functions as the 4-aspartylphosphate intermediate in the catalytic mechanism. Aspartate 794 and aspartate 798 together coordinate Mg(2+). A helical membrane pass occupies residues 850–869 (SKFLQFQLTVNVVAVIVAFT). Over 870-879 (GACITQDSPL) the chain is Extracellular. Residues 880–900 (KAVQMLWVNLIMDTFASLALA) form a helical membrane-spanning segment. Residues 901–920 (TEPPTESLLLRKPYGRDKPL) lie on the Cytoplasmic side of the membrane. Residues 921–943 (ISRTMMKNILGHAVYQLTIIFTL) traverse the membrane as a helical segment. Residues 944-961 (LFVGELFFDIDSGRNAPL) lie on the Extracellular side of the membrane. The helical transmembrane segment at 962-983 (HSPPSEHYTIIFNTFVMMQLFN) threads the bilayer. Over 984–1002 (EINARKIHGERNVFDGIFS) the chain is Cytoplasmic. Residues 1003–1024 (NPIFCTIVLGTFGIQIVIVQFG) form a helical membrane-spanning segment. The Extracellular portion of the chain corresponds to 1025 to 1034 (GKPFSCSPLS). The chain crosses the membrane as a helical span at residues 1035 to 1056 (TEQWLWCLFVGVGELVWGQVIA). Residues 1057-1258 (TIPTSQLKCL…SPLHSMETSL (202 aa)) lie on the Cytoplasmic side of the membrane. Threonine 1079 is modified (phosphothreonine). The segment at 1097–1114 (LRRGQILWFRGLNRIQTQ) is calmodulin-binding subdomain A. Threonine 1113 carries the post-translational modification Phosphothreonine; by PKC. Residues 1115-1124 (MEVVSTFKRS) form a calmodulin-binding subdomain B region. Serine 1126 carries the phosphoserine modification. Positions 1204–1258 (ENEERLRAPPPPPPNQNNNAIDSGIYLTTHATKSATSSAFSSRPGSPLHSMETSL) are disordered. A compositionally biased stretch (low complexity) spans 1231-1245 (TTHATKSATSSAFSS).

This sequence belongs to the cation transport ATPase (P-type) (TC 3.A.3) family. Type IIB subfamily. Interacts with PDZD11. Interacts (via N-terminus) with YWHAE. Expressed predominantly in brain and skeletal muscle. Expressed in the molecular layer of the cerebellar cortex, in particular in granule cells (at protein level). Expressed in aldosterone producing glomerulosa cells of adrenal glands (at protein level). Detected at low levels in various tissues including testis, stomach, small intestine, and large intestine. As to expression, most abundant form in brain and most other tissues. In terms of tissue distribution, most abundant form in skeletal muscle and is also found in brain and at low levels in testis and kidney.

Its subcellular location is the cell membrane. It is found in the presynaptic cell membrane. It carries out the reaction Ca(2+)(in) + ATP + H2O = Ca(2+)(out) + ADP + phosphate + H(+). ATP-driven Ca(2+) ion pump involved in the maintenance of basal intracellular Ca(2+) levels at the presynaptic terminals. Uses ATP as an energy source to transport cytosolic Ca(2+) ions across the plasma membrane to the extracellular compartment. May counter-transport protons, but the mechanism and the stoichiometry of this Ca(2+)/H(+) exchange remains to be established. The chain is Plasma membrane calcium-transporting ATPase 3 (Atp2b3) from Rattus norvegicus (Rat).